The chain runs to 232 residues: 7-cyano-7-deazaguanine synthase 2 (232 aa).

9–19 provides a ligand contact to ATP; that stretch reads FSGGQDSTTCL. Cys189, Cys198, Cys201, and Cys204 together coordinate Zn(2+).

The protein belongs to the QueC family. Zn(2+) serves as cofactor.

The catalysed reaction is 7-carboxy-7-deazaguanine + NH4(+) + ATP = 7-cyano-7-deazaguanine + ADP + phosphate + H2O + H(+). It functions in the pathway purine metabolism; 7-cyano-7-deazaguanine biosynthesis. Catalyzes the ATP-dependent conversion of 7-carboxy-7-deazaguanine (CDG) to 7-cyano-7-deazaguanine (preQ(0)). The protein is 7-cyano-7-deazaguanine synthase 2 of Pseudomonas fluorescens (strain ATCC BAA-477 / NRRL B-23932 / Pf-5).